A 40-amino-acid chain; its full sequence is Dolichyl-diphosphooligosaccharide--protein glycosyltransferase subunit 4 (40 aa).

At 1–4 (MITD) the chain is on the lumenal side. Residues 5–25 (VQLAIFSNVLGVFLFLLVVAY) traverse the membrane as a helical segment. At 26–40 (HYINANTGKSSIKTK) the chain is on the cytoplasmic side.

It belongs to the OST4 family. Component of the oligosaccharyltransferase (OST) complex.

Its subcellular location is the endoplasmic reticulum membrane. In terms of biological role, subunit of the oligosaccharyl transferase (OST) complex that catalyzes the initial transfer of a defined glycan (Glc(3)Man(9)GlcNAc(2) in eukaryotes) from the lipid carrier dolichol-pyrophosphate to an asparagine residue within an Asn-X-Ser/Thr consensus motif in nascent polypeptide chains, the first step in protein N-glycosylation. N-glycosylation occurs cotranslationally and the complex associates with the Sec61 complex at the channel-forming translocon complex that mediates protein translocation across the endoplasmic reticulum (ER). All subunits are required for a maximal enzyme activity. The chain is Dolichyl-diphosphooligosaccharide--protein glycosyltransferase subunit 4 from Drosophila virilis (Fruit fly).